The chain runs to 445 residues: Phosphoglucosamine mutase (445 aa).

Ser102 (phosphoserine intermediate) is an active-site residue. Mg(2+) contacts are provided by Ser102, Asp241, Asp243, and Asp245. Residue Ser102 is modified to Phosphoserine.

The protein belongs to the phosphohexose mutase family. Mg(2+) serves as cofactor. Activated by phosphorylation.

The enzyme catalyses alpha-D-glucosamine 1-phosphate = D-glucosamine 6-phosphate. Catalyzes the conversion of glucosamine-6-phosphate to glucosamine-1-phosphate. The protein is Phosphoglucosamine mutase of Hahella chejuensis (strain KCTC 2396).